An 87-amino-acid chain; its full sequence is Small ribosomal subunit protein uS17 (87 aa).

It belongs to the universal ribosomal protein uS17 family. Part of the 30S ribosomal subunit.

Functionally, one of the primary rRNA binding proteins, it binds specifically to the 5'-end of 16S ribosomal RNA. The protein is Small ribosomal subunit protein uS17 of Geobacillus kaustophilus (strain HTA426).